The chain runs to 477 residues: Ribulose bisphosphate carboxylase large chain (477 aa).

Residues 1–2 (MS) constitute a propeptide that is removed on maturation. N-acetylproline is present on Pro3. The residue at position 14 (Lys14) is an N6,N6,N6-trimethyllysine. Substrate contacts are provided by Asn123 and Thr173. Lys175 functions as the Proton acceptor in the catalytic mechanism. Substrate is bound at residue Lys177. Mg(2+) is bound by residues Lys201, Asp203, and Glu204. Lys201 bears the N6-carboxylysine mark. His294 (proton acceptor) is an active-site residue. The substrate site is built by Arg295, His327, and Ser379.

Belongs to the RuBisCO large chain family. Type I subfamily. Heterohexadecamer of 8 large chains and 8 small chains; disulfide-linked. The disulfide link is formed within the large subunit homodimers. Mg(2+) is required as a cofactor. In terms of processing, the disulfide bond which can form in the large chain dimeric partners within the hexadecamer appears to be associated with oxidative stress and protein turnover.

It localises to the plastid. It is found in the chloroplast. It catalyses the reaction 2 (2R)-3-phosphoglycerate + 2 H(+) = D-ribulose 1,5-bisphosphate + CO2 + H2O. The enzyme catalyses D-ribulose 1,5-bisphosphate + O2 = 2-phosphoglycolate + (2R)-3-phosphoglycerate + 2 H(+). Its function is as follows. RuBisCO catalyzes two reactions: the carboxylation of D-ribulose 1,5-bisphosphate, the primary event in carbon dioxide fixation, as well as the oxidative fragmentation of the pentose substrate in the photorespiration process. Both reactions occur simultaneously and in competition at the same active site. The polypeptide is Ribulose bisphosphate carboxylase large chain (Carthamus tinctorius (Safflower)).